Consider the following 473-residue polypeptide: H(+)/Cl(-) exchange transporter ClcA (473 aa).

Residues 1-32 (MNTDTPTFEAQQVVRLRRGDLIRRLLQRDKTP) lie on the Cytoplasmic side of the membrane. A helical transmembrane segment spans residues 33–69 (LAILLTAAVVGTVTGLIGVAFEKAVTWVQNLRIGALV). The Periplasmic portion of the chain corresponds to 70 to 76 (QTADYAI). The chain crosses the membrane as a helical span at residues 77–100 (LVWPLAFILSALLAMVGYFLVRKF). At 101-108 (APEAGGSG) the chain is on the cytoplasmic side. Residues 106–110 (GSGIP) carry the Selectivity filter part_1 motif. S107 contributes to the chloride binding site. The helical intramembrane region spans 109 to 116 (IPEIEGAL). Residues 117–123 (EELRPVR) are Cytoplasmic-facing. The chain crosses the membrane as a helical span at residues 124–141 (WWRVLPVKFVGGMGTLGA). The Periplasmic segment spans residues 142-147 (GMVLGR). The short motif at 146-150 (GREGP) is the Selectivity filter part_2 element. A helical membrane pass occupies residues 148-166 (EGPTVQIGGNIGRMVLDLF). Residues 167-176 (RMRSAEARHT) are Cytoplasmic-facing. 2 intramembrane regions (helical) span residues 177–189 (LLAT…LSAA) and 193–201 (PLAGILFII). Residues 202 to 214 (EEMRPQFRYNLIS) are Cytoplasmic-facing. Residues 215–232 (IKAVFTGVIMSSIVFRIF) traverse the membrane as a helical segment. Residues 233–252 (NGEAPIIEVGKLSNAPVNTL) lie on the Periplasmic side of the membrane. A helical membrane pass occupies residues 253–281 (WLYLILGMIFGCVGPLFNHLVLRTQDMFQ). Topologically, residues 282-287 (RFHGGE) are cytoplasmic. A helical transmembrane segment spans residues 288–309 (IKKWVLMGGAIGGLCGILGLIE). Residues 310–329 (PEAAGGGFNLIPIAAAGNYS) are Periplasmic-facing. Residues 330 to 349 (VGLLLFIFIARVLTTLLCFS) traverse the membrane as a helical segment. Topologically, residues 350-354 (SGAPG) are cytoplasmic. The Selectivity filter part_3 signature appears at 355-359 (GIFAP). A helical transmembrane segment spans residues 355-376 (GIFAPMLALGTLLGTAFGMAAA). The chloride site is built by I356 and F357. Topologically, residues 377 to 386 (ACFPQYHLEA) are periplasmic. Positions 387-401 (GTFAIAGMGALLAAS) form an intramembrane region, helical. Positions 402-404 (VRA) form an intramembrane region, note=Loop between two helices. The segment at residues 405–416 (PLTGIVLVLEMT) is an intramembrane region (helical). Positions 417 to 421 (DNYQL) form an intramembrane region, note=Loop between two helices. A helical transmembrane segment spans residues 422–438 (ILPMIITCLGATLLAQF). Residues 439–473 (MGGKPLYSTILARTLAKQDAEQAAKSQRSVAGENT) lie on the Cytoplasmic side of the membrane. Y445 provides a ligand contact to chloride.

It belongs to the chloride channel (TC 2.A.49) family. ClcA subfamily. In terms of assembly, homodimer.

The protein resides in the cell inner membrane. The enzyme catalyses 2 chloride(in) + H(+)(out) = 2 chloride(out) + H(+)(in). Functionally, proton-coupled chloride transporter. Functions as antiport system and exchanges two chloride ions for 1 proton. Probably acts as an electrical shunt for an outwardly-directed proton pump that is linked to amino acid decarboxylation, as part of the extreme acid resistance (XAR) response. The sequence is that of H(+)/Cl(-) exchange transporter ClcA from Citrobacter koseri (strain ATCC BAA-895 / CDC 4225-83 / SGSC4696).